A 302-amino-acid polypeptide reads, in one-letter code: uncharacterized protein (302 aa).

Residues Asn-32, Asn-39, and Asn-94 are each glycosylated (N-linked (GlcNAc...) asparagine). Residues 80–115 enclose the ShKT domain; the sequence is CRDTDMNCAVWVATNTSDCENVELVNSHCPRTCQTC. 3 disulfide bridges follow: Cys-80–Cys-115, Cys-87–Cys-108, and Cys-98–Cys-112. The N-linked (GlcNAc...) asparagine glycan is linked to Asn-181.

This is an uncharacterized protein from Caenorhabditis elegans.